We begin with the raw amino-acid sequence, 268 residues long: Acyl-CoA-binding domain-containing protein 4 (268 aa).

Positions 12-101 (CQKQFQAAVS…MKLVAQKVID (90 aa)) constitute an ACB domain. An acyl-CoA contacts are provided by residues 23-32 (IQNLPKNGSY), 43-47 (YSYYK), Lys-69, and Tyr-88. A disordered region spans residues 151 to 175 (AVSEPPCLPKEPAPPSPESHSPRDL). Pro residues predominate over residues 156–167 (PCLPKEPAPPSP). Ser-166 and Ser-171 each carry phosphoserine.

Functionally, binds medium- and long-chain acyl-CoA esters and may function as an intracellular carrier of acyl-CoA esters. This is Acyl-CoA-binding domain-containing protein 4 (ACBD4) from Homo sapiens (Human).